Reading from the N-terminus, the 270-residue chain is tRNA pseudouridine synthase A (270 aa).

Aspartate 51 functions as the Nucleophile in the catalytic mechanism. Tyrosine 109 contacts substrate.

This sequence belongs to the tRNA pseudouridine synthase TruA family. In terms of assembly, homodimer.

The enzyme catalyses uridine(38/39/40) in tRNA = pseudouridine(38/39/40) in tRNA. In terms of biological role, formation of pseudouridine at positions 38, 39 and 40 in the anticodon stem and loop of transfer RNAs. The protein is tRNA pseudouridine synthase A of Burkholderia vietnamiensis (strain G4 / LMG 22486) (Burkholderia cepacia (strain R1808)).